The following is a 273-amino-acid chain: Putative phosphoenolpyruvate synthase regulatory protein (273 aa).

153–160 (GVSRSGKT) contributes to the ADP binding site.

Belongs to the pyruvate, phosphate/water dikinase regulatory protein family. PSRP subfamily.

It carries out the reaction [pyruvate, water dikinase] + ADP = [pyruvate, water dikinase]-phosphate + AMP + H(+). It catalyses the reaction [pyruvate, water dikinase]-phosphate + phosphate + H(+) = [pyruvate, water dikinase] + diphosphate. Its function is as follows. Bifunctional serine/threonine kinase and phosphorylase involved in the regulation of the phosphoenolpyruvate synthase (PEPS) by catalyzing its phosphorylation/dephosphorylation. The chain is Putative phosphoenolpyruvate synthase regulatory protein from Leptothrix cholodnii (strain ATCC 51168 / LMG 8142 / SP-6) (Leptothrix discophora (strain SP-6)).